Consider the following 250-residue polypeptide: 3-deoxy-manno-octulosonate cytidylyltransferase (250 aa).

It belongs to the KdsB family.

The protein localises to the cytoplasm. The catalysed reaction is 3-deoxy-alpha-D-manno-oct-2-ulosonate + CTP = CMP-3-deoxy-beta-D-manno-octulosonate + diphosphate. It functions in the pathway nucleotide-sugar biosynthesis; CMP-3-deoxy-D-manno-octulosonate biosynthesis; CMP-3-deoxy-D-manno-octulosonate from 3-deoxy-D-manno-octulosonate and CTP: step 1/1. Its pathway is bacterial outer membrane biogenesis; lipopolysaccharide biosynthesis. Its function is as follows. Activates KDO (a required 8-carbon sugar) for incorporation into bacterial lipopolysaccharide in Gram-negative bacteria. This Legionella pneumophila subsp. pneumophila (strain Philadelphia 1 / ATCC 33152 / DSM 7513) protein is 3-deoxy-manno-octulosonate cytidylyltransferase.